Consider the following 511-residue polypeptide: Bifunctional purine biosynthesis protein PurH (511 aa).

The MGS-like domain maps to 1 to 145 (MKKRALVSVS…KNHKFVSVIV (145 aa)).

This sequence belongs to the PurH family.

It catalyses the reaction (6R)-10-formyltetrahydrofolate + 5-amino-1-(5-phospho-beta-D-ribosyl)imidazole-4-carboxamide = 5-formamido-1-(5-phospho-D-ribosyl)imidazole-4-carboxamide + (6S)-5,6,7,8-tetrahydrofolate. The enzyme catalyses IMP + H2O = 5-formamido-1-(5-phospho-D-ribosyl)imidazole-4-carboxamide. It participates in purine metabolism; IMP biosynthesis via de novo pathway; 5-formamido-1-(5-phospho-D-ribosyl)imidazole-4-carboxamide from 5-amino-1-(5-phospho-D-ribosyl)imidazole-4-carboxamide (10-formyl THF route): step 1/1. Its pathway is purine metabolism; IMP biosynthesis via de novo pathway; IMP from 5-formamido-1-(5-phospho-D-ribosyl)imidazole-4-carboxamide: step 1/1. This Bacillus cereus (strain 03BB102) protein is Bifunctional purine biosynthesis protein PurH.